Here is a 101-residue protein sequence, read N- to C-terminus: Urease subunit beta (101 aa).

It belongs to the urease beta subunit family. Heterotrimer of UreA (gamma), UreB (beta) and UreC (alpha) subunits. Three heterotrimers associate to form the active enzyme.

The protein localises to the cytoplasm. It carries out the reaction urea + 2 H2O + H(+) = hydrogencarbonate + 2 NH4(+). The protein operates within nitrogen metabolism; urea degradation; CO(2) and NH(3) from urea (urease route): step 1/1. This Cupriavidus pinatubonensis (strain JMP 134 / LMG 1197) (Cupriavidus necator (strain JMP 134)) protein is Urease subunit beta.